Reading from the N-terminus, the 371-residue chain is Cathepsin W (371 aa).

Residues methionine 1–serine 21 form the signal peptide. A propeptide spanning residues aspartate 22–serine 125 is cleaved from the precursor. 2 N-linked (GlcNAc...) asparagine glycosylation sites follow: asparagine 48 and asparagine 112. Cystine bridges form between cysteine 148–cysteine 189, cysteine 182–cysteine 224, and cysteine 282–cysteine 347. Residue cysteine 151 is part of the active site. N-linked (GlcNAc...) asparagine glycosylation occurs at asparagine 203. Residues histidine 289 and asparagine 326 contribute to the active site. The N-linked (GlcNAc...) asparagine glycan is linked to asparagine 344.

Belongs to the peptidase C1 family.

It localises to the endoplasmic reticulum. Its function is as follows. May have a specific function in the mechanism or regulation of T-cell cytolytic activity. The sequence is that of Cathepsin W (Ctsw) from Mus musculus (Mouse).